Reading from the N-terminus, the 98-residue chain is DNA-binding protein Fis (98 aa).

The H-T-H motif DNA-binding region spans 74–93 (QTRAAVMMGINRGTLRKKLK).

This sequence belongs to the transcriptional regulatory Fis family. As to quaternary structure, homodimer.

Functionally, activates ribosomal RNA transcription. Plays a direct role in upstream activation of rRNA promoters. The chain is DNA-binding protein Fis from Aeromonas hydrophila subsp. hydrophila (strain ATCC 7966 / DSM 30187 / BCRC 13018 / CCUG 14551 / JCM 1027 / KCTC 2358 / NCIMB 9240 / NCTC 8049).